A 212-amino-acid polypeptide reads, in one-letter code: Peptide methionine sulfoxide reductase MsrA (212 aa).

Residue cysteine 52 is part of the active site.

Belongs to the MsrA Met sulfoxide reductase family.

The enzyme catalyses L-methionyl-[protein] + [thioredoxin]-disulfide + H2O = L-methionyl-(S)-S-oxide-[protein] + [thioredoxin]-dithiol. The catalysed reaction is [thioredoxin]-disulfide + L-methionine + H2O = L-methionine (S)-S-oxide + [thioredoxin]-dithiol. Has an important function as a repair enzyme for proteins that have been inactivated by oxidation. Catalyzes the reversible oxidation-reduction of methionine sulfoxide in proteins to methionine. The chain is Peptide methionine sulfoxide reductase MsrA from Escherichia coli O6:K15:H31 (strain 536 / UPEC).